Consider the following 181-residue polypeptide: K99 fimbrial protein (181 aa).

The signal sequence occupies residues 1–22 (MKKTLLAIILGGMAFATTNASA). Cys38 and Cys79 are joined by a disulfide.

The protein belongs to the fimbrial protein family.

It localises to the fimbrium. Its function is as follows. Fimbriae (also called pili), polar filaments radiating from the surface of the bacterium to a length of 0.5-1.5 micrometers and numbering 100-300 per cell, enable bacteria to colonize the epithelium of specific host organs. In terms of biological role, fanC is the main component of the K99 fimbriae. This chain is K99 fimbrial protein (fanC), found in Escherichia coli.